We begin with the raw amino-acid sequence, 156 residues long: Small ribosomal subunit protein uS7 (156 aa).

Belongs to the universal ribosomal protein uS7 family. In terms of assembly, part of the 30S ribosomal subunit. Contacts proteins S9 and S11.

One of the primary rRNA binding proteins, it binds directly to 16S rRNA where it nucleates assembly of the head domain of the 30S subunit. Is located at the subunit interface close to the decoding center, probably blocks exit of the E-site tRNA. This Vibrio atlanticus (strain LGP32) (Vibrio splendidus (strain Mel32)) protein is Small ribosomal subunit protein uS7.